A 608-amino-acid chain; its full sequence is Sensor protein kinase WalK (608 aa).

The next 2 membrane-spanning stretches (helical) occupy residues 14–34 and 183–203; these read LVIV…LYFT and IFIV…FFIA. Residues 204 to 256 enclose the HAMP domain; that stretch reads RTITKPITDMRNQTVEMSRGNYTQRVKIYGNDEIGELALAFNNLSKRVQEAQA. Residues 261–331 enclose the PAS domain; that stretch reads EKRRLDSVIT…EIQENNDSFL (71 aa). Positions 271, 274, 364, and 368 each coordinate Zn(2+). The PAC domain occupies 314–378; that stretch reads LEDEFKLEEI…QQQVERERRE (65 aa). Residues 382–600 form the Histidine kinase domain; it reads NVSHELRTPL…SIFITLPCEV (219 aa). A Phosphohistidine; by autocatalysis modification is found at His-385.

As to quaternary structure, forms homodimers. Forms homooligomers. Post-translationally, autophosphorylated.

It is found in the cell membrane. The catalysed reaction is ATP + protein L-histidine = ADP + protein N-phospho-L-histidine.. By zinc. Zinc-binding negatively regulates WalK kinase activity and thus autophosphorylation. Its function is as follows. Member of the two-component regulatory system WalK/WalR that regulates genes involved in cell wall metabolism, virulence regulation, biofilm production, oxidative stress resistance and antibiotic resistance via direct or indirect regulation of autolysins. Functions as a sensor protein kinase which is autophosphorylated at a histidine residue in the dimerization domain and transfers its phosphate group to the conserved aspartic acid residue in the regulatory domain of WalR. In turn, WalR binds to the upstream promoter regions of the target genes to positively and negatively regulate their expression. In Staphylococcus aureus (strain MRSA252), this protein is Sensor protein kinase WalK (walK).